A 1188-amino-acid polypeptide reads, in one-letter code: Phospholipid-transporting ATPase IB (1188 aa).

Topologically, residues 1 to 94 (MLNGAGLDKA…PRFLYEQIRR (94 aa)) are cytoplasmic. Residue Thr45 is modified to Phosphothreonine. The helical transmembrane segment at 95 to 115 (AANAFFLFIALLQQIPDVSPT) threads the bilayer. Over 116–119 (GRYT) the chain is Extracellular. The chain crosses the membrane as a helical span at residues 120–140 (TLVPLIIILTIAGIKEIVEDF). Topologically, residues 141–316 (KRHKADNAVN…SNVEKVTNVQ (176 aa)) are cytoplasmic. The chain crosses the membrane as a helical span at residues 317–337 (ILVLFGILLVMALVSSAGALY). Over 338-364 (WNRSHGEKNWYIKKMDTTSDNFGYNLL) the chain is Extracellular. A helical membrane pass occupies residues 365 to 385 (TFIILYNNLIPISLLVTLEVV). Topologically, residues 386 to 887 (KYTQALFINW…CILYCFYKNV (502 aa)) are cytoplasmic. Asp428 acts as the 4-aspartylphosphate intermediate in catalysis. ATP is bound by residues Asp428, Lys429, Thr430, Glu528, Phe569, Lys592, Arg625, Thr705, Gly706, Asp707, Arg795, and Lys801. Mg(2+) is bound at residue Asp428. A Mg(2+)-binding site is contributed by Thr430. Asp821 serves as a coordination point for Mg(2+). Asn824 and Asp825 together coordinate ATP. Residue Asp825 coordinates Mg(2+). A helical membrane pass occupies residues 888-908 (VLYIIELWFAFVNGFSGQILF). Residues 909 to 910 (ER) lie on the Extracellular side of the membrane. The chain crosses the membrane as a helical span at residues 911 to 931 (WCIGLYNVIFTALPPFTLGIF). Topologically, residues 932–959 (ERSCTQESMLRFPQLYKITQNGEGFNTK) are cytoplasmic. A helical transmembrane segment spans residues 960–980 (VFWGHCINALVHSLILFWFPM). At 981-997 (KALEHDTVLTSGHATDY) the chain is on the extracellular side. The chain crosses the membrane as a helical span at residues 998 to 1018 (LFVGNIVYTYVVVTVCLKAGL). Over 1019–1028 (ETTAWTKFSH) the chain is Cytoplasmic. Residues 1029–1049 (LAVWGSMLTWLVFFGIYSTIW) traverse the membrane as a helical segment. The Extracellular portion of the chain corresponds to 1050–1063 (PTIPIAPDMRGQAT). The chain crosses the membrane as a helical span at residues 1064-1084 (MVLSSAHFWLGLFLVPTACLI). Topologically, residues 1085–1188 (EDVAWRAAKH…DTTKKKSRKK (104 aa)) are cytoplasmic. Residues 1162-1188 (SQEEHGAVSQEEVIRAYDTTKKKSRKK) are disordered. Residues 1163 to 1182 (QEEHGAVSQEEVIRAYDTTK) show a composition bias toward basic and acidic residues.

Belongs to the cation transport ATPase (P-type) (TC 3.A.3) family. Type IV subfamily. Component of a P4-ATPase flippase complex which consists of a catalytic alpha subunit and an accessory beta subunit. Interacts with TMEM30A to form a flippase complex. The cofactor is Mg(2+). In terms of tissue distribution, strongly expressed in the brain, cerebellum, retina and testis.

It is found in the membrane. The protein resides in the golgi apparatus membrane. Its subcellular location is the endosome membrane. The protein localises to the cell membrane. It localises to the photoreceptor outer segment membrane. It is found in the photoreceptor inner segment membrane. The catalysed reaction is ATP + H2O + phospholipidSide 1 = ADP + phosphate + phospholipidSide 2.. The enzyme catalyses a 1,2-diacyl-sn-glycero-3-phospho-L-serine(out) + ATP + H2O = a 1,2-diacyl-sn-glycero-3-phospho-L-serine(in) + ADP + phosphate + H(+). It carries out the reaction a 1,2-diacyl-sn-glycero-3-phosphoethanolamine(in) + ATP + H2O = a 1,2-diacyl-sn-glycero-3-phosphoethanolamine(out) + ADP + phosphate + H(+). Catalytic component of a P4-ATPase flippase complex which catalyzes the hydrolysis of ATP coupled to the transport of aminophospholipids from the outer to the inner leaflet of various membranes and ensures the maintenance of asymmetric distribution of phospholipids. Able to translocate phosphatidylserine, but not phosphatidylcholine. Phospholipid translocation also seems to be implicated in vesicle formation and in uptake of lipid signaling molecules. Reconstituted to liposomes, the ATP8A2:TMEM30A flippase complex predominantly transports phosphatidylserine (PS) and to a lesser extent phosphatidylethanolamine (PE). Phospholipid translocation is not associated with a countertransport of an inorganic ion or other charged substrate from the cytoplasmic side toward the exoplasm in connection with the phosphorylation from ATP. ATP8A2:TMEM30A may be involved in regulation of neurite outgrowth. Proposed to function in the generation and maintenance of phospholipid asymmetry in photoreceptor disk membranes and neuronal axon membranes. May be involved in vesicle trafficking in neuronal cells. Required for normal visual and auditory function; involved in photoreceptor and inner ear spiral ganglion cell survival. In Homo sapiens (Human), this protein is Phospholipid-transporting ATPase IB.